A 403-amino-acid chain; its full sequence is MATIDESLALIGRGAEEILKLEQLEARLTSGVPLRVKAGFDPTAPDLHLGHTVLLNKMRQFQELGHQVIFLIGDFTGMIGDPSGKNVTRKPLSREDVLANARTYEEQVFKILDRTRTEVRFNSEWFGQMSAADMIKLSAQHTVARMLERDDFAKRFAGQQPIAIHEFLYPLVQGYDSVALKADVELGGTDQTFNLLMGRGLQEHYGQAPQVVLTMPLLEGLDGVAKMSKSLGNYIGINEPAIDIVTKTMKIGDTLTWRWIDLLSFDISVAEAARFKEDVAAGNLHPRDVKLRLARELATRFHDAATAEQAIAGWHAVVTGQGDTSVLPLQQVSVPAEGLRIASLLTAAGLTPSNSEATRKLKERAVKIDGEVVDDLARQFGPGFEGVIQVGKRNFARVALVTS.

Positions 42-51 (PTAPDLHLGH) match the 'HIGH' region motif. The 'KMSKS' region signature appears at 226–230 (KMSKS). Residue K229 coordinates ATP. Positions 339–400 (LRIASLLTAA…GKRNFARVAL (62 aa)) constitute an S4 RNA-binding domain.

This sequence belongs to the class-I aminoacyl-tRNA synthetase family. TyrS type 2 subfamily. Homodimer.

It localises to the cytoplasm. The enzyme catalyses tRNA(Tyr) + L-tyrosine + ATP = L-tyrosyl-tRNA(Tyr) + AMP + diphosphate + H(+). Functionally, catalyzes the attachment of tyrosine to tRNA(Tyr) in a two-step reaction: tyrosine is first activated by ATP to form Tyr-AMP and then transferred to the acceptor end of tRNA(Tyr). This Xanthomonas campestris pv. campestris (strain ATCC 33913 / DSM 3586 / NCPPB 528 / LMG 568 / P 25) protein is Tyrosine--tRNA ligase.